The chain runs to 392 residues: CD2 homolog (392 aa).

An N-terminal signal peptide occupies residues 1 to 16 (MIIKLIFLICFKIVLS). At 17 to 222 (IDNKTKFNET…YLDFFQVTSY (206 aa)) the chain is on the extracellular side. N-linked (GlcNAc...) asparagine; by host glycosylation is found at Asn39, Asn88, Asn92, Asn106, Asn148, Asn159, Asn183, Asn191, Asn198, and Asn204. Disulfide bonds link Cys137-Cys205 and Cys144-Cys188. Residues 223 to 243 (IFYMIIFIVTGITVSILISII) form a helical membrane-spanning segment. Residues 244 to 392 (TFLFIRKRKH…ISLIHVDRII (149 aa)) are Cytoplasmic-facing. Residues 258-290 (ESPPPESNEEEQQCHHDTTSIHEPSPREPLLPK) form a disordered region. Over residues 269–283 (QQCHHDTTSIHEPSP) the composition is skewed to basic and acidic residues. Repeat copies occupy residues 319–324 (KPCPPP), 325–330 (KPCPPP), 331–336 (KPCPPP), 337–342 (KPCPPS), and 343–348 (KPCPPP). Residues 319-348 (KPCPPPKPCPPPKPCPPPKPCPPSKPCPPP) form a 5 X 6 AA tandem repeats of K-P-C-[PRS]-[P]-[PS] region. The segment at 328–357 (PPPKPCPPPKPCPPSKPCPPPEPYSPPKPC) is disordered.

The protein belongs to the asfivirus CD2 homolog protein family. Both glycosylated and nonglycosylated forms interact (via C-terminus) with the host AP-1 complex. Cleaved into two fragments of 63 kDa and 26 kDa containing respectively the glycosylated N-terminus and the nonglycosylated C-terminus. A full-length 89-kDa glycosylated form also exists.

The protein localises to the host cell membrane. The protein resides in the virion membrane. Its subcellular location is the host Golgi apparatus. Its function is as follows. May play an immunosuppressive role by inhibiting lymphocyte proliferation and subsequently facilitating viral replication and generalization of infection. Responsible for viral hemadsorption, which may help viral spread. Increases virus replication in the tick vector at the step of virus uptake or replication in the tick gut. May play a role in the host Golgi reorganization to yield viral factories. May play a role in host cell penetration. The polypeptide is CD2 homolog (Ornithodoros (relapsing fever ticks)).